Reading from the N-terminus, the 166-residue chain is Regulator of ribonuclease activity A (166 aa).

The protein belongs to the RraA family. As to quaternary structure, homotrimer. Binds to both RNA-binding sites in the C-terminal region of Rne and to RhlB.

Its subcellular location is the cytoplasm. Functionally, globally modulates RNA abundance by binding to RNase E (Rne) and regulating its endonucleolytic activity. Can modulate Rne action in a substrate-dependent manner by altering the composition of the degradosome. Modulates RNA-binding and helicase activities of the degradosome. The protein is Regulator of ribonuclease activity A of Histophilus somni (strain 129Pt) (Haemophilus somnus).